A 332-amino-acid polypeptide reads, in one-letter code: 6-phosphogluconolactonase (332 aa).

The protein belongs to the cycloisomerase 2 family.

It carries out the reaction 6-phospho-D-glucono-1,5-lactone + H2O = 6-phospho-D-gluconate + H(+). The protein operates within carbohydrate degradation; pentose phosphate pathway; D-ribulose 5-phosphate from D-glucose 6-phosphate (oxidative stage): step 2/3. Functionally, catalyzes the hydrolysis of 6-phosphogluconolactone to 6-phosphogluconate. In Pectobacterium carotovorum subsp. carotovorum (strain PC1), this protein is 6-phosphogluconolactonase.